The following is a 102-amino-acid chain: Large ribosomal subunit protein uL24 (102 aa).

This sequence belongs to the universal ribosomal protein uL24 family. In terms of assembly, part of the 50S ribosomal subunit.

Functionally, one of two assembly initiator proteins, it binds directly to the 5'-end of the 23S rRNA, where it nucleates assembly of the 50S subunit. In terms of biological role, one of the proteins that surrounds the polypeptide exit tunnel on the outside of the subunit. The polypeptide is Large ribosomal subunit protein uL24 (Rhizobium leguminosarum bv. trifolii (strain WSM2304)).